The sequence spans 372 residues: Glutamate 5-kinase (372 aa).

Position 9 (lysine 9) interacts with ATP. Positions 49, 136, and 148 each coordinate substrate. Residues 168 to 169 (TD) and 210 to 216 (TGGMKSK) contribute to the ATP site. Residues 276-353 (AGSIEIDSGA…EEALSLTKRS (78 aa)) form the PUA domain.

It belongs to the glutamate 5-kinase family.

The protein resides in the cytoplasm. It carries out the reaction L-glutamate + ATP = L-glutamyl 5-phosphate + ADP. It participates in amino-acid biosynthesis; L-proline biosynthesis; L-glutamate 5-semialdehyde from L-glutamate: step 1/2. Catalyzes the transfer of a phosphate group to glutamate to form L-glutamate 5-phosphate. The protein is Glutamate 5-kinase of Shouchella clausii (strain KSM-K16) (Alkalihalobacillus clausii).